Consider the following 394-residue polypeptide: Stabilizer of axonemal microtubules 2 (394 aa).

Mn stretches follow at residues 110–122 (STTF…PQEI), 144–158 (DTSH…QLEV), 244–256 (NSTS…PYQA), 278–292 (KSTT…EICR), 312–324 (LSTF…PHEL), and 346–360 (VTMY…KQEI).

Belongs to the FAM154 family.

The protein is Stabilizer of axonemal microtubules 2 (Saxo2) of Mus musculus (Mouse).